Consider the following 458-residue polypeptide: MAAQGATAAVAATTSGIVGEGEPGPGENTSVEGPARSPGRVSPPTPARGEPEVTVEIGETYLCRRPDSTWHSAEVIQSRVNDQEGREEFYVHYVGFNRRLDEWVDKNRLALTKTVKDAVQKNSEKYLSELAEQPERKITRNQKRKHDEINHVQKTYAEMDPTTAALEKEHEAITKVKYVDKIHIGNYEIDAWYFSPFPEDYGKQPKLWLCEYCLKYMKFEKSYRFHLGQCQWRQPPGKEIYRKSNISVYEVDGKDHKIYCQNLCLLAKLFLDHKTLYFDVEPFVFYILTEVDRQGAHIVGYFSKEKESPDGNNVACILTLPPYQRRGYGKFLIAFSYELSKLESTVGSPEKPLSDLGKLSYRSYWSWVLLEILRDFRGTLSIKDLSQMTSITQNDIISTLQSLNMVKYWKGQHVICVTPKLVEEHLKSAQYKKPPITVDSVCLKWAPPKHKQVKLSKK.

The segment covering Met-1–Thr-14 has biased composition (low complexity). The segment at Met-1–Glu-52 is disordered. Ala-2 is subject to N-acetylalanine. 2 positions are modified to phosphoserine: Ser-37 and Ser-42. The Tudor-knot domain occupies Val-55–Ala-110. Lys-113 carries the N6-acetyllysine modification. The Nuclear localization signal signature appears at Arg-140–Ile-149. Residues Thr-174–Pro-447 enclose the MYST-type HAT domain. Positions Thr-174–Lys-458 are sufficient for interaction with KANSL1. A C2HC MYST-type zinc finger spans residues Leu-207–Trp-232. Positions 210, 213, 226, and 230 each coordinate Zn(2+). Lys-274 is subject to N6-acetyllysine; by autocatalysis. Acetyl-CoA contacts are provided by Ile-317, Thr-319, Arg-325, Arg-326, Gly-327, Gly-329, and Lys-330. Ser-348 is subject to Phosphoserine. Catalysis depends on Glu-350, which acts as the Proton donor/acceptor. Acetyl-CoA contacts are provided by Ser-354, Ser-363, Tyr-408, and Lys-432.

It belongs to the MYST (SAS/MOZ) family. In terms of assembly, component of a multisubunit histone acetyltransferase complex (MSL) at least composed of the MOF/KAT8, MSL1/hampin, MSL2L1 and MSL3L1. Component of the NSL complex at least composed of MOF/KAT8, KANSL1, KANSL2, KANSL3, MCRS1, PHF20, OGT1/OGT, WDR5 and HCFC1. Component of some MLL1/MLL complex, at least composed of the core components KMT2A/MLL1, ASH2L, HCFC1, WDR5 and RBBP5, as well as the facultative components BACC1, CHD8, E2F6, HSP70, INO80C, KANSL1, LAS1L, MAX, MCRS1, MGA, MOF/KAT8, PELP1, PHF20, PRP31, RING2, RUVB1/TIP49A, RUVB2/TIP49B, SENP3, TAF1, TAF4, TAF6, TAF7, TAF9 and TEX10. Interacts with the chromodomain of MORF4L1/MRG15. Interacts with ATM (via its Tudor-knot domain); possibly regulating the activity of ATM. Interacts with NELFD. Acetylation at Lys-274 facilitates cognate substrate Lys-binding and acetylation. Although considered as an autoacetylation event, acetylation at Lys-274 probably takes place via a non-enzymatic process following acetyl-CoA-binding, which primes KAT8 for cognate protein-lysine acetylation. Deacetylated by SIRT1.

The protein resides in the nucleus. It is found in the chromosome. Its subcellular location is the mitochondrion. The enzyme catalyses L-lysyl-[histone] + acetyl-CoA = N(6)-acetyl-L-lysyl-[histone] + CoA + H(+). It carries out the reaction L-lysyl-[protein] + acetyl-CoA = N(6)-acetyl-L-lysyl-[protein] + CoA + H(+). It catalyses the reaction propanoyl-CoA + L-lysyl-[protein] = N(6)-propanoyl-L-lysyl-[protein] + CoA + H(+). Its activity is regulated as follows. The acetyltransferase activity is inhibited by anacardic acid derivatives. Its function is as follows. Histone acetyltransferase that catalyzes histone H4 acetylation at 'Lys-5'- and 'Lys-8' (H4K5ac and H4K8ac) or 'Lys-16' (H4K16ac), depending on the context. Catalytic component of the MSL histone acetyltransferase complex, a multiprotein complex that mediates the majority of histone H4 acetylation at 'Lys-16' (H4K16ac), an epigenetic mark that prevents chromatin compaction. H4K16ac constitutes the only acetylation mark intergenerationally transmitted and regulates key biological processes, such as oogenesis, embryonic stem cell pluripotency, hematopoiesis or glucose metabolism. The MSL complex is required for chromosome stability and genome integrity by maintaining homeostatic levels of H4K16ac. The MSL complex is also involved in gene dosage by promoting up-regulation of genes expressed by the X chromosome. X up-regulation is required to compensate for autosomal biallelic expression. The MSL complex also participates in gene dosage compensation by promoting expression of Tsix non-coding RNA. As part of the NSL histone acetyltransferase complex, catalyzes histone H4 acetylation at 'Lys-5'- and 'Lys-8' (H4K5ac and H4K8ac) at transcription start sites and promotes transcription initiation. The NSL complex also acts as a regulator of gene expression in mitochondria: KAT8 associates with mitochondrial DNA and controls expression of respiratory genes in an acetyltransferase-dependent mechanism. Also functions as an acetyltransferase for non-histone targets, such as ALKBH5, COX17, IRF3, KDM1A/LSD1, LMNA, PAX7 or TP53/p53. Acts as an inhibitor of antiviral immunity by acetylating IRF3, preventing IRF3 recruitment to promoters. Acts as a regulator of asymmetric division in muscle stem cells by mediating acetylation of PAX7. As part of the NSL complex, acetylates TP53/p53 at 'Lys-120'. Acts as a regulator of epithelial-to-mesenchymal transition as part of the NSL complex by mediating acetylation of KDM1A/LSD1. The NSL complex is required for nuclear architecture maintenance by mediating acetylation of LMNA. Promotes mitochondrial integrity by catalyzing acetylation of COX17. In addition to protein acetyltransferase activity, able to mediate protein propionylation. In Rattus norvegicus (Rat), this protein is Histone acetyltransferase KAT8 (Kat8).